The sequence spans 403 residues: Argininosuccinate synthase (403 aa).

Residues 10-18 (AYSGGLDTS) and alanine 37 each bind ATP. Tyrosine 89 lines the L-citrulline pocket. Glycine 119 provides a ligand contact to ATP. The L-aspartate site is built by threonine 121, asparagine 125, and aspartate 126. An L-citrulline-binding site is contributed by asparagine 125. L-citrulline-binding residues include arginine 129, serine 178, serine 187, glutamate 263, and tyrosine 275.

It belongs to the argininosuccinate synthase family. Type 1 subfamily. In terms of assembly, homotetramer.

The protein resides in the cytoplasm. It carries out the reaction L-citrulline + L-aspartate + ATP = 2-(N(omega)-L-arginino)succinate + AMP + diphosphate + H(+). It participates in amino-acid biosynthesis; L-arginine biosynthesis; L-arginine from L-ornithine and carbamoyl phosphate: step 2/3. The polypeptide is Argininosuccinate synthase (Idiomarina loihiensis (strain ATCC BAA-735 / DSM 15497 / L2-TR)).